The sequence spans 139 residues: Nucleoside diphosphate kinase (139 aa).

ATP contacts are provided by Lys10, Phe58, Arg86, Thr92, Arg103, and Asn113. His116 (pros-phosphohistidine intermediate) is an active-site residue.

This sequence belongs to the NDK family. Homotetramer. Requires Mg(2+) as cofactor.

Its subcellular location is the cytoplasm. The catalysed reaction is a 2'-deoxyribonucleoside 5'-diphosphate + ATP = a 2'-deoxyribonucleoside 5'-triphosphate + ADP. It carries out the reaction a ribonucleoside 5'-diphosphate + ATP = a ribonucleoside 5'-triphosphate + ADP. Major role in the synthesis of nucleoside triphosphates other than ATP. The ATP gamma phosphate is transferred to the NDP beta phosphate via a ping-pong mechanism, using a phosphorylated active-site intermediate. This chain is Nucleoside diphosphate kinase, found in Desulfovibrio desulfuricans (strain ATCC 27774 / DSM 6949 / MB).